A 166-amino-acid polypeptide reads, in one-letter code: Mitochondrial fission process protein 1 (166 aa).

3 consecutive transmembrane segments (helical) span residues 33–53 (SLVK…YVAA), 78–98 (AIAA…IPGF), and 125–145 (TVTC…DSFV).

It belongs to the MTFP1 family.

The protein resides in the mitochondrion inner membrane. Its function is as follows. Involved in the mitochondrial division probably by regulating membrane fission. Loss-of-function leads to apoptosis. This is Mitochondrial fission process protein 1 (mtp-18) from Caenorhabditis elegans.